A 359-amino-acid chain; its full sequence is Histidinol-phosphate aminotransferase (359 aa).

The residue at position 212 (K212) is an N6-(pyridoxal phosphate)lysine.

This sequence belongs to the class-II pyridoxal-phosphate-dependent aminotransferase family. Histidinol-phosphate aminotransferase subfamily. As to quaternary structure, homodimer. Pyridoxal 5'-phosphate serves as cofactor.

It carries out the reaction L-histidinol phosphate + 2-oxoglutarate = 3-(imidazol-4-yl)-2-oxopropyl phosphate + L-glutamate. Its pathway is amino-acid biosynthesis; L-histidine biosynthesis; L-histidine from 5-phospho-alpha-D-ribose 1-diphosphate: step 7/9. This is Histidinol-phosphate aminotransferase from Buchnera aphidicola subsp. Melaphis rhois.